The chain runs to 274 residues: 5'-3' exoribonuclease (274 aa).

Mn(2+) contacts are provided by His8, His10, Asp15, His40, Glu65, His76, His190, Asp247, and His249.

This sequence belongs to the PHP family. TrpH/YciV subfamily. Mn(2+) serves as cofactor.

The enzyme catalyses a ribonucleoside 3',5'-bisphosphate + H2O = a ribonucleoside 5'-phosphate + phosphate. In terms of biological role, efficiently catalyzes the hydrolysis of the 3'-phosphate from 3',5'-bis-phosphonucleotides as well as the successive hydrolysis of 5'-phosphomononucleotides from the 5'-end of short pieces of RNA and DNA, with no specificity toward the identity of the nucleotide base. Is more efficient at hydrolyzing RNA oligonucleotides than DNA oligonucleotides. This enzyme can also hydrolyze annealed DNA duplexes, albeit at a catalytic efficiency lower than that of the corresponding single-stranded oligonucleotides. The polypeptide is 5'-3' exoribonuclease (Haemophilus influenzae (strain ATCC 51907 / DSM 11121 / KW20 / Rd)).